The following is a 338-amino-acid chain: DNA-directed RNA polymerase subunit alpha (338 aa).

Residues 1–234 form an alpha N-terminal domain (alpha-NTD) region; sequence MIHKNWAELI…DQLSVFVNFD (234 aa). The segment at 250 to 338 is alpha C-terminal domain (alpha-CTD); that stretch reads FDPRLLKKVD…DLAKRFDDQF (89 aa).

It belongs to the RNA polymerase alpha chain family. In terms of assembly, homodimer. The RNAP catalytic core consists of 2 alpha, 1 beta, 1 beta' and 1 omega subunit. When a sigma factor is associated with the core the holoenzyme is formed, which can initiate transcription.

It carries out the reaction RNA(n) + a ribonucleoside 5'-triphosphate = RNA(n+1) + diphosphate. DNA-dependent RNA polymerase catalyzes the transcription of DNA into RNA using the four ribonucleoside triphosphates as substrates. The protein is DNA-directed RNA polymerase subunit alpha of Paracoccus denitrificans (strain Pd 1222).